A 158-amino-acid chain; its full sequence is Retinoic acid receptor beta (158 aa).

The segment covering 1-18 (RHSAQSIETQSTSSEELV) has biased composition (low complexity). The disordered stretch occupies residues 1–24 (RHSAQSIETQSTSSEELVPSPPSP). The segment at residues 31-106 (YKPCFVCQDK…VGMSKESVRN (76 aa)) is a DNA-binding region (nuclear receptor). 2 consecutive NR C4-type zinc fingers follow at residues 34 to 54 (CFVC…CEGC) and 70 to 94 (CHRD…LQRC). The NR LBD domain maps to 129 to 158 (ELDDLTEKIRKAHQETFPSLCQLGKYTTNS).

This sequence belongs to the nuclear hormone receptor family. NR1 subfamily. In terms of assembly, heterodimer; with a RXR molecule. Binds DNA preferentially as a RAR/RXR heterodimer.

The protein resides in the nucleus. Receptor for retinoic acid. Retinoic acid receptors bind as heterodimers to their target response elements in response to their ligands, all-trans or 9-cis retinoic acid, and regulate gene expression in various biological processes. The RAR/RXR heterodimers bind to the retinoic acid response elements (RARE) composed of tandem 5'-AGGTCA-3' sites known as DR1-DR5. The polypeptide is Retinoic acid receptor beta (RARB) (Notophthalmus viridescens (Eastern newt)).